We begin with the raw amino-acid sequence, 631 residues long: Mitochondrial Rho GTPase (631 aa).

Residues 1 to 605 are Cytoplasmic-facing; that stretch reads MRAGRVRPLR…TQADLKSSTF (605 aa). A Miro 1 domain is found at 15-181; the sequence is KKDVRILLVG…FYYAQKAVLH (167 aa). Arg27, Gly29, Lys30, Thr31, and Ser32 together coordinate GTP. Thr31 is a binding site for Mg(2+). A Mg(2+)-binding site is contributed by Asp70. A GTP-binding site is contributed by Ser72. Lys105 is subject to N6-acetyllysine. GTP is bound by residues Asn131, Lys132, Asp134, Ala162, and Lys163. Residue Lys166 forms a Glycyl lysine isopeptide (Lys-Gly) (interchain with G-Cter in ubiquitin) linkage. The EF-hand 1 domain occupies 197–232; the sequence is ACIKALTRIFKISDQDNDGTLNDAELNFFQRICFNT. Asp210, Asp212, Asp214, Thr216, and Glu221 together coordinate Ca(2+). Residue Lys248 forms a Glycyl lysine isopeptide (Lys-Gly) (interchain with G-Cter in ubiquitin) linkage. Positions 317 to 352 constitute an EF-hand 2 domain; that stretch reads HAYLFLQSTFDKHDLDRDCALSPDELKDLFQVFPYI. 5 residues coordinate Ca(2+): Asp330, Asp332, Asp334, Ala336, and Glu341. The 164-residue stretch at 429 to 592 folds into the Miro 2 domain; it reads RNVFRCNVIG…FVKLTTMAMY (164 aa). GTP contacts are provided by Gly441, Cys442, Gly443, Lys444, Thr445, Gly446, Lys460, Lys541, Asp543, Thr571, and Cys572. Residue Gly441 coordinates Mg(2+). Residue Lys585 forms a Glycyl lysine isopeptide (Lys-Gly) (interchain with G-Cter in ubiquitin) linkage. A helical; Anchor for type IV membrane protein transmembrane segment spans residues 606–628; the sequence is WLRASFGATVFAVVGFAMYRALL. Residues 629–631 lie on the Mitochondrial intermembrane side of the membrane; it reads KQR.

The protein belongs to the mitochondrial Rho GTPase family. Homodimer. Interacts with the kinesin-binding proteins TRAK1/OIP106 and TRAK2/GRIF1, forming a link between mitochondria and the trafficking apparatus of the microtubules. Interacts with RAP1GDS1. Interacts with ARMCX1. Found in a complex with KIF5B, OGT, RHOT2 and TRAK1. In terms of processing, ubiquitinated by PRKN during mitophagy, leading to its degradation and enhancement of mitophagy. Deubiquitinated by USP30. Acetylation on Lys-105 decreases sensitivity of mitochondrial transport to elevated Ca(2+) levels, increases mitochondrial transport and promotes axon growth. Deacetylated by HDAC6 which blocks mitochondrial transport and mediates axon growth inhibition.

It localises to the mitochondrion outer membrane. The enzyme catalyses GTP + H2O = GDP + phosphate + H(+). It carries out the reaction ATP + H2O = ADP + phosphate + H(+). The catalysed reaction is UTP + H2O = UDP + phosphate + H(+). In terms of biological role, atypical mitochondrial nucleoside-triphosphatase (NTPase) involved in mitochondrial trafficking. Probably involved in control of anterograde transport of mitochondria and their subcellular distribution. Promotes mitochondrial fission during high calcium conditions. Can hydrolyze GTP, ATP and UTP. The sequence is that of Mitochondrial Rho GTPase from Rattus norvegicus (Rat).